A 288-amino-acid polypeptide reads, in one-letter code: MSQFSFTKMHGLGNSYIYVNMFEEQIPEEDLALVAEKVSNINTGIGADGMILICPSDVAPVKMRMFNNDGSEGKSCGNGLRCVAKYAYEHKLVEETVFTIETLAGIVTAEVTVEDGVVTLAKIDMGAPRLTRAEIPMLGESETPFIRENFLYNNHRYAFTAVSMGNPHAVIFVDDVEKAPLTTLGPVLETHEMFPERVNVEFIEILNEDEMNFRVWERGSGVTQACGTGACAAVVAAILNGKMERGKEITVHLAGGDLMIAWTEEGNVLMKGPAEVICRGVYEYKIEA.

Residues N14 and N67 each coordinate substrate. Residue C76 is the Proton donor of the active site. Substrate contacts are provided by residues 77 to 78 (GN), N166, N199, and 217 to 218 (ER). C226 functions as the Proton acceptor in the catalytic mechanism. Position 227 to 228 (227 to 228 (GT)) interacts with substrate.

This sequence belongs to the diaminopimelate epimerase family. As to quaternary structure, homodimer.

It localises to the cytoplasm. It catalyses the reaction (2S,6S)-2,6-diaminopimelate = meso-2,6-diaminopimelate. It participates in amino-acid biosynthesis; L-lysine biosynthesis via DAP pathway; DL-2,6-diaminopimelate from LL-2,6-diaminopimelate: step 1/1. Catalyzes the stereoinversion of LL-2,6-diaminopimelate (L,L-DAP) to meso-diaminopimelate (meso-DAP), a precursor of L-lysine and an essential component of the bacterial peptidoglycan. This is Diaminopimelate epimerase from Bacillus cereus (strain ATCC 14579 / DSM 31 / CCUG 7414 / JCM 2152 / NBRC 15305 / NCIMB 9373 / NCTC 2599 / NRRL B-3711).